The primary structure comprises 176 residues: Ribosome maturation factor RimM (176 aa).

Residues 97-176 enclose the PRC barrel domain; that stretch reads EDEFYWRDLI…QILVDWDPDF (80 aa).

This sequence belongs to the RimM family. Binds ribosomal protein uS19.

It localises to the cytoplasm. In terms of biological role, an accessory protein needed during the final step in the assembly of 30S ribosomal subunit, possibly for assembly of the head region. Essential for efficient processing of 16S rRNA. May be needed both before and after RbfA during the maturation of 16S rRNA. It has affinity for free ribosomal 30S subunits but not for 70S ribosomes. The sequence is that of Ribosome maturation factor RimM from Shewanella sp. (strain ANA-3).